A 356-amino-acid polypeptide reads, in one-letter code: 3-dehydroquinate synthase (356 aa).

NAD(+)-binding positions include 106–110 (GVVGD), 130–131 (TS), Lys-143, Lys-152, and 170–173 (FLKT). Zn(2+) is bound by residues Glu-185, His-246, and His-263.

It belongs to the sugar phosphate cyclases superfamily. Dehydroquinate synthase family. NAD(+) serves as cofactor. Requires Co(2+) as cofactor. The cofactor is Zn(2+).

The protein localises to the cytoplasm. The enzyme catalyses 7-phospho-2-dehydro-3-deoxy-D-arabino-heptonate = 3-dehydroquinate + phosphate. It functions in the pathway metabolic intermediate biosynthesis; chorismate biosynthesis; chorismate from D-erythrose 4-phosphate and phosphoenolpyruvate: step 2/7. Catalyzes the conversion of 3-deoxy-D-arabino-heptulosonate 7-phosphate (DAHP) to dehydroquinate (DHQ). The chain is 3-dehydroquinate synthase from Clostridium acetobutylicum (strain ATCC 824 / DSM 792 / JCM 1419 / IAM 19013 / LMG 5710 / NBRC 13948 / NRRL B-527 / VKM B-1787 / 2291 / W).